The following is a 313-amino-acid chain: Spermatid maturation protein 1 (313 aa).

Residues 29–49 (ILLLLGLIICINIGINMVTLL) form a helical membrane-spanning segment. Disordered stretches follow at residues 71-90 (KLRSPGKQTQPSKHSSPAVH), 97-151 (AVKM…HNWD), 243-263 (EPPILGPANVPDIPRRRSSGR), and 291-313 (LASGSSTAEGTRKDWVYRSMTER). Residues 76–85 (GKQTQPSKHS) are compositionally biased toward polar residues. Residues 107–122 (TRRRHRRGSSSRRARR) are compositionally biased toward basic residues. A coiled-coil region spans residues 263 to 289 (RVTYDARDVRRRLRELTREVEALSHCY). Positions 300 to 313 (GTRKDWVYRSMTER) are enriched in basic and acidic residues.

The protein localises to the membrane. Its subcellular location is the cytoplasm. Its function is as follows. Required for proper cytoplasm removal during spermatogenesis. This chain is Spermatid maturation protein 1 (SPEM1), found in Bos taurus (Bovine).